Consider the following 609-residue polypeptide: Rhotekin-2 (609 aa).

The 77-residue stretch at 5–81 folds into the REM-1 domain; that stretch reads SLRGPALRLA…LQKLEEQIAN (77 aa). Positions 56-91 form a coiled coil; the sequence is KNLMVCNARLMAYTSELQKLEEQIANQTGRCDVKFE. The PH domain maps to 286 to 393; sequence EDAFAGFLNQ…WMEAFWQHFF (108 aa). 2 disordered regions span residues 495–520 and 554–609; these read HDEK…KSQS and KPMA…QAQV. Residues 569-582 show a composition bias toward basic and acidic residues; sequence RLSDGEHTDTKTNF.

In terms of tissue distribution, expressed in lymphocytes, CD4 positive T-cells and bone marrow-derived cells. Also expressed in lung, colon, thymus and brain.

In terms of biological role, may play an important role in lymphopoiesis. This Homo sapiens (Human) protein is Rhotekin-2 (RTKN2).